The sequence spans 214 residues: MKFFIDTADVKEIREAHELGVVDGVTTNPSLIAKSGRKFADVIKEISGIVDGPISAEVVSLEHDGMISEAEELVKIHPNIVIKLPMTPEGLKATKTLSAKGIKTNVTLIFTPMQALLAAKAGATYVSPFVGRLDDISQDGMGIIEEIRTIFDNYGYTAEIIVASIRNPIHVLNSALIGADVATIPFSVIMQLAKHPLTDAGIKKFLEDWEKVPK.

The active-site Schiff-base intermediate with substrate is lysine 83.

This sequence belongs to the transaldolase family. Type 3B subfamily.

It localises to the cytoplasm. It carries out the reaction D-sedoheptulose 7-phosphate + D-glyceraldehyde 3-phosphate = D-erythrose 4-phosphate + beta-D-fructose 6-phosphate. It functions in the pathway carbohydrate degradation; pentose phosphate pathway; D-glyceraldehyde 3-phosphate and beta-D-fructose 6-phosphate from D-ribose 5-phosphate and D-xylulose 5-phosphate (non-oxidative stage): step 2/3. Transaldolase is important for the balance of metabolites in the pentose-phosphate pathway. The protein is Probable transaldolase of Geotalea daltonii (strain DSM 22248 / JCM 15807 / FRC-32) (Geobacter daltonii).